A 333-amino-acid polypeptide reads, in one-letter code: D-fructose 1,6-bisphosphatase class 2/sedoheptulose 1,7-bisphosphatase (333 aa).

Mn(2+) is bound by residues Asp33, Glu57, Asp85, and Glu88. Residues Glu88–Thr90, Tyr119, Arg164–Arg166, and Asp186–Asp188 contribute to the substrate site. Glu213 provides a ligand contact to Mn(2+).

It belongs to the FBPase class 2 family. In terms of assembly, homotetramer. Mn(2+) serves as cofactor.

It catalyses the reaction beta-D-fructose 1,6-bisphosphate + H2O = beta-D-fructose 6-phosphate + phosphate. The enzyme catalyses D-sedoheptulose 1,7-bisphosphate + H2O = D-sedoheptulose 7-phosphate + phosphate. It participates in carbohydrate biosynthesis; Calvin cycle. Its function is as follows. Catalyzes the hydrolysis of fructose 1,6-bisphosphate (Fru 1,6-P2) and sedoheptulose 1,7-bisphosphate (Sed 1,7-P2) to fructose 6-phosphate and sedoheptulose 7-phosphate, respectively. The polypeptide is D-fructose 1,6-bisphosphatase class 2/sedoheptulose 1,7-bisphosphatase (Prochlorococcus marinus subsp. pastoris (strain CCMP1986 / NIES-2087 / MED4)).